A 215-amino-acid polypeptide reads, in one-letter code: Probable GTP-binding protein EngB (215 aa).

The EngB-type G domain maps to 31–215; it reads GPPEIAFAGR…RTAILQAVVQ (185 aa). GTP is bound by residues 39–46, 66–70, 93–96, 160–163, and 194–196; these read GRSNVGKS, GRTQE, DMPG, TKSD, and TSA. Mg(2+) is bound by residues Ser-46 and Thr-68.

This sequence belongs to the TRAFAC class TrmE-Era-EngA-EngB-Septin-like GTPase superfamily. EngB GTPase family. It depends on Mg(2+) as a cofactor.

In terms of biological role, necessary for normal cell division and for the maintenance of normal septation. This is Probable GTP-binding protein EngB from Bartonella bacilliformis (strain ATCC 35685 / KC583 / Herrer 020/F12,63).